The following is a 59-amino-acid chain: Large ribosomal subunit protein uL30 (59 aa).

The protein belongs to the universal ribosomal protein uL30 family. As to quaternary structure, part of the 50S ribosomal subunit.

The sequence is that of Large ribosomal subunit protein uL30 from Mycobacterium sp. (strain JLS).